The sequence spans 517 residues: Transcription factor MTB3 (517 aa).

The disordered stretch occupies residues 290-331 (GNSSNGYRSDEGEGKLYKEELDERKPRKRGRKPANGREEALN). Residues 297–314 (RSDEGEGKLYKEELDERK) are compositionally biased toward basic and acidic residues. The segment at 327-340 (EEALNHVEAERQRR) is basic motif; degenerate. The 50-residue stretch at 327–376 (EEALNHVEAERQRREKLNQRFYALRAVVPNISKMDKASLLGDAIAYITDL) folds into the bHLH domain. Residues 341–376 (EKLNQRFYALRAVVPNISKMDKASLLGDAIAYITDL) are helix-loop-helix motif.

Its subcellular location is the nucleus. Functionally, transcription factor that negatively regulates jasmonate (JA) signaling. Negatively regulates JA-dependent response to wounding, JA-induced expression of defense genes, JA-dependent responses against herbivorous insects, and JA-dependent resistance against Botrytis cinerea infection. Plays a positive role in resistance against the bacterial pathogen Pseudomonas syringae pv tomato DC3000. The sequence is that of Transcription factor MTB3 from Solanum lycopersicum (Tomato).